The primary structure comprises 205 residues: Thymidylate kinase (205 aa).

An ATP-binding site is contributed by 13-20 (GIDGSGKS).

It belongs to the thymidylate kinase family.

The catalysed reaction is dTMP + ATP = dTDP + ADP. Its function is as follows. Phosphorylation of dTMP to form dTDP in both de novo and salvage pathways of dTTP synthesis. This chain is Thymidylate kinase, found in Leptospira borgpetersenii serovar Hardjo-bovis (strain L550).